A 515-amino-acid polypeptide reads, in one-letter code: uncharacterized protein (515 aa).

Helical transmembrane passes span Met-1–Ile-21, Ile-165–Phe-185, and Gly-199–Gly-219. The region spanning Met-1–Ala-93 is the PE domain. Residues Gly-349 to Gly-360 are compositionally biased toward gly residues. 2 disordered regions span residues Gly-349 to Phe-368 and Gly-463 to Gly-515.

Belongs to the mycobacterial PE family. PGRS subfamily.

Its subcellular location is the cell membrane. This is an uncharacterized protein from Mycobacterium tuberculosis (strain CDC 1551 / Oshkosh).